A 323-amino-acid polypeptide reads, in one-letter code: uncharacterized protein (323 aa).

Positions 1–142 (MPSVFFSYSH…QVAKAVREAA (142 aa)) constitute a TIR domain.

This is an uncharacterized protein from Sinorhizobium fredii (strain NBRC 101917 / NGR234).